We begin with the raw amino-acid sequence, 315 residues long: L-lactate dehydrogenase (315 aa).

NAD(+) contacts are provided by residues Val17, Asp38, Lys43, Tyr69, and 83–84 (GA). Residues Gln86 and Arg92 each coordinate substrate. NAD(+) contacts are provided by residues Ser105, 122-124 (ATN), and Ser147. Substrate is bound at residue 124-127 (NPVD). 152–155 (DTAR) is a binding site for substrate. Beta-D-fructose 1,6-bisphosphate contacts are provided by Arg157 and His172. His179 acts as the Proton acceptor in catalysis. A Phosphotyrosine modification is found at Tyr223. Thr232 serves as a coordination point for substrate.

This sequence belongs to the LDH/MDH superfamily. LDH family. Homotetramer.

It is found in the cytoplasm. It carries out the reaction (S)-lactate + NAD(+) = pyruvate + NADH + H(+). The protein operates within fermentation; pyruvate fermentation to lactate; (S)-lactate from pyruvate: step 1/1. With respect to regulation, allosterically activated by fructose 1,6-bisphosphate (FBP). Catalyzes the conversion of lactate to pyruvate. This chain is L-lactate dehydrogenase, found in Macrococcus caseolyticus (strain JCSC5402) (Macrococcoides caseolyticum).